The primary structure comprises 123 residues: MAKAIYVKFDTPEELANQAEEALKTAQDSGKVAKGTNEVTKFIERGDAALVVIAEDVDPAEIVAHIPVLADEKEIPYIYLPTKEQVGGAAGLTVGTASACIVDAGDAEGDVAEIVEKIAELKE.

It belongs to the eukaryotic ribosomal protein eL8 family. As to quaternary structure, part of the 50S ribosomal subunit. Probably part of the RNase P complex.

The protein localises to the cytoplasm. Multifunctional RNA-binding protein that recognizes the K-turn motif in ribosomal RNA, the RNA component of RNase P, box H/ACA, box C/D and box C'/D' sRNAs. This is Large ribosomal subunit protein eL8 from Methanobrevibacter smithii (strain ATCC 35061 / DSM 861 / OCM 144 / PS).